Here is a 228-residue protein sequence, read N- to C-terminus: Urease accessory protein UreF (228 aa).

This sequence belongs to the UreF family. UreD, UreF and UreG form a complex that acts as a GTP-hydrolysis-dependent molecular chaperone, activating the urease apoprotein by helping to assemble the nickel containing metallocenter of UreC. The UreE protein probably delivers the nickel.

Its subcellular location is the cytoplasm. In terms of biological role, required for maturation of urease via the functional incorporation of the urease nickel metallocenter. In Brucella ovis (strain ATCC 25840 / 63/290 / NCTC 10512), this protein is Urease accessory protein UreF.